The primary structure comprises 276 residues: Small ribosomal subunit protein uS5w (276 aa).

Over residues 1 to 15 (MAERGVERGGDRGDF) the composition is skewed to basic and acidic residues. Residues 1–42 (MAERGVERGGDRGDFGRGFGGRGGGRGGPRGRGRRAGRAPEE) are disordered. A compositionally biased stretch (gly residues) spans 16–28 (GRGFGGRGGGRGG). An S5 DRBM domain is found at 87–150 (LKDEVMKIMP…ILAKLSVVPI (64 aa)).

This sequence belongs to the universal ribosomal protein uS5 family.

The sequence is that of Small ribosomal subunit protein uS5w (RPS2D) from Arabidopsis thaliana (Mouse-ear cress).